A 311-amino-acid chain; its full sequence is UDP-N-acetylenolpyruvoylglucosamine reductase (311 aa).

The region spanning 34 to 198 (MGGAADLFIT…LEGTFRLQKG (165 aa)) is the FAD-binding PCMH-type domain. Residue Arg177 is part of the active site. Ser227 serves as the catalytic Proton donor. The active site involves Glu297.

It belongs to the MurB family. FAD serves as cofactor.

The protein resides in the cytoplasm. The catalysed reaction is UDP-N-acetyl-alpha-D-muramate + NADP(+) = UDP-N-acetyl-3-O-(1-carboxyvinyl)-alpha-D-glucosamine + NADPH + H(+). The protein operates within cell wall biogenesis; peptidoglycan biosynthesis. In terms of biological role, cell wall formation. This is UDP-N-acetylenolpyruvoylglucosamine reductase from Shouchella clausii (strain KSM-K16) (Alkalihalobacillus clausii).